A 154-amino-acid polypeptide reads, in one-letter code: Ribosome maturation factor RimP (154 aa).

Belongs to the RimP family.

It is found in the cytoplasm. Required for maturation of 30S ribosomal subunits. This Acetivibrio thermocellus (strain ATCC 27405 / DSM 1237 / JCM 9322 / NBRC 103400 / NCIMB 10682 / NRRL B-4536 / VPI 7372) (Clostridium thermocellum) protein is Ribosome maturation factor RimP.